A 730-amino-acid polypeptide reads, in one-letter code: Exostosin-1a (730 aa).

The Cytoplasmic portion of the chain corresponds to 1–6; that stretch reads MQAKKR. A helical; Signal-anchor for type II membrane protein transmembrane segment spans residues 7-27; sequence YLILFSAGVCLILLFYLQGPA. Over 28–730 the chain is Lumenal; that stretch reads SRRTPKRGDD…RKKYRDIERL (703 aa). A glycan (N-linked (GlcNAc...) asparagine) is linked at Asn-314. UDP-N-acetyl-alpha-D-glucosamine is bound by residues Arg-533, Asp-549, Glu-550, Asp-551, Glu-637, Asp-638, and Arg-685. Asp-551 serves as a coordination point for Mn(2+). Cys-636 and Cys-688 are joined by a disulfide. Asp-638 is an active-site residue.

It belongs to the glycosyltransferase 47 family. Requires Mn(2+) as cofactor.

It is found in the endoplasmic reticulum membrane. The enzyme catalyses 3-O-{[(1-&gt;4)-beta-D-GlcA-(1-&gt;4)-alpha-D-GlcNAc](n)-(1-&gt;4)-beta-D-GlcA-(1-&gt;3)-beta-D-Gal-(1-&gt;3)-beta-D-Gal-(1-&gt;4)-beta-D-Xyl}-L-seryl-[protein] + UDP-N-acetyl-alpha-D-glucosamine = 3-O-{alpha-D-GlcNAc-[(1-&gt;4)-beta-D-GlcA-(1-&gt;4)-alpha-D-GlcNAc](n)-(1-&gt;4)-beta-D-GlcA-(1-&gt;3)-beta-D-Gal-(1-&gt;3)-beta-D-Gal-(1-&gt;4)-beta-D-Xyl}-L-seryl-[protein] + UDP + H(+). It catalyses the reaction 3-O-{alpha-D-GlcNAc-[(1-&gt;4)-beta-D-GlcA-(1-&gt;4)-alpha-D-GlcNAc](n)-(1-&gt;4)-beta-D-GlcA-(1-&gt;3)-beta-D-Gal-(1-&gt;3)-beta-D-Gal-(1-&gt;4)-beta-D-Xyl}-L-seryl-[protein] + UDP-alpha-D-glucuronate = 3-O-{[(1-&gt;4)-beta-D-GlcA-(1-&gt;4)-alpha-D-GlcNAc](n+1)-(1-&gt;4)-beta-D-GlcA-(1-&gt;3)-beta-D-Gal-(1-&gt;3)-beta-D-Gal-(1-&gt;4)-beta-D-Xyl}-L-seryl-[protein] + UDP + H(+). It functions in the pathway protein modification; protein glycosylation. Its function is as follows. Glycosyltransferase required for the biosynthesis of heparan-sulfate. The protein is Exostosin-1a (ext1a) of Danio rerio (Zebrafish).